Consider the following 470-residue polypeptide: Small ribosomal subunit protein bS1m (470 aa).

The disordered stretch occupies residues 436 to 470 (FKKIPMTAARLRGRYENSDSPSSPTMSGSSGYGLR). Over residues 453-464 (SDSPSSPTMSGS) the composition is skewed to low complexity.

It belongs to the bacterial ribosomal protein bS1 family. In terms of assembly, component of the mitochondrial small ribosomal subunit (mt-SSU). Mature N.crassa 74S mitochondrial ribosomes consist of a small (37S) and a large (54S) subunit. The 37S small subunit contains a 16S ribosomal RNA (16S mt-rRNA) and 32 different proteins. The 54S large subunit contains a 23S rRNA (23S mt-rRNA) and 42 different proteins.

It localises to the mitochondrion. Functionally, component of the mitochondrial ribosome (mitoribosome), a dedicated translation machinery responsible for the synthesis of mitochondrial genome-encoded proteins, including at least some of the essential transmembrane subunits of the mitochondrial respiratory chain. The mitoribosomes are attached to the mitochondrial inner membrane and translation products are cotranslationally integrated into the membrane. The chain is Small ribosomal subunit protein bS1m (mrp51) from Neurospora crassa (strain ATCC 24698 / 74-OR23-1A / CBS 708.71 / DSM 1257 / FGSC 987).